The following is a 290-amino-acid chain: Transcription cofactor vestigial-like protein 4 (290 aa).

Position 1 is an N-acetylmethionine (M1). A compositionally biased stretch (basic and acidic residues) spans A17–P30. Disordered stretches follow at residues A17 to E65, L85 to E106, L140 to R161, and A254 to S290. The residue at position 52 (S52) is a Phosphoserine. Basic and acidic residues predominate over residues D92–I105. Phosphoserine is present on S149. Polar residues predominate over residues P150–R161. The residue at position 153 (T153) is a Phosphothreonine. Residues P272 to S290 are compositionally biased toward low complexity. S274 carries the phosphoserine modification.

Belongs to the vestigial family. As to quaternary structure, interacts with TEFs. Interacts with IRF2BP2.

It is found in the nucleus. May act as a specific coactivator for the mammalian TEFs. The polypeptide is Transcription cofactor vestigial-like protein 4 (Homo sapiens (Human)).